We begin with the raw amino-acid sequence, 657 residues long: Regulator of MON1-CCZ1 complex (657 aa).

Residues 471–637 form the Mic1 domain; that stretch reads KKEMPHKFVI…NFTPGEHCEE (167 aa).

It belongs to the RMC1 family. In terms of assembly, found in a complex with RMC1, CCZ1 MON1A and MON1B.

It is found in the lysosome membrane. It localises to the late endosome membrane. Its function is as follows. Component of the CCZ1-MON1 RAB7A guanine exchange factor (GEF). Acts as a positive regulator of CCZ1-MON1A/B function necessary for endosomal/autophagic flux and efficient RAB7A localization. The protein is Regulator of MON1-CCZ1 complex of Homo sapiens (Human).